A 283-amino-acid polypeptide reads, in one-letter code: Polyamine aminopropyltransferase (283 aa).

The PABS domain maps to 5-238 (STWIDEYHKG…GIWSWTFASE (234 aa)). Residue glutamine 32 coordinates S-methyl-5'-thioadenosine. Residues histidine 63 and aspartate 87 each contribute to the spermidine site. Residues glutamate 107 and 139–140 (DG) each bind S-methyl-5'-thioadenosine. The active-site Proton acceptor is aspartate 158. 158 to 161 (DCSD) contributes to the spermidine binding site.

The protein belongs to the spermidine/spermine synthase family. As to quaternary structure, homodimer or homotetramer.

It is found in the cytoplasm. It catalyses the reaction S-adenosyl 3-(methylsulfanyl)propylamine + putrescine = S-methyl-5'-thioadenosine + spermidine + H(+). It functions in the pathway amine and polyamine biosynthesis; spermidine biosynthesis; spermidine from putrescine: step 1/1. In terms of biological role, catalyzes the irreversible transfer of a propylamine group from the amino donor S-adenosylmethioninamine (decarboxy-AdoMet) to putrescine (1,4-diaminobutane) to yield spermidine. This Prochlorococcus marinus (strain MIT 9312) protein is Polyamine aminopropyltransferase.